Here is a 210-residue protein sequence, read N- to C-terminus: Casparian strip membrane protein 1 (210 aa).

The segment at methionine 1–leucine 25 is disordered. At methionine 1–glycine 48 the chain is on the cytoplasmic side. Residues valine 49–isoleucine 69 form a helical membrane-spanning segment. At threonine 70–threonine 98 the chain is on the extracellular side. Residues phenylalanine 99–isoleucine 119 traverse the membrane as a helical segment. Over valine 120–aspartate 138 the chain is Cytoplasmic. A helical transmembrane segment spans residues threonine 139 to alanine 159. Over histidine 160–serine 183 the chain is Extracellular. A helical membrane pass occupies residues glycine 184–alanine 204. At serine 205–histidine 210 the chain is on the cytoplasmic side.

It belongs to the Casparian strip membrane proteins (CASP) family. As to quaternary structure, homodimer and heterodimers.

Its subcellular location is the cell membrane. Regulates membrane-cell wall junctions and localized cell wall deposition. Required for establishment of the Casparian strip membrane domain (CSD) and the subsequent formation of Casparian strips, a cell wall modification of the root endodermis that determines an apoplastic barrier between the intraorganismal apoplasm and the extraorganismal apoplasm and prevents lateral diffusion. This chain is Casparian strip membrane protein 1, found in Erythranthe guttata (Yellow monkey flower).